Here is a 464-residue protein sequence, read N- to C-terminus: MDVVIMAAGKGTRMKSKLPKVLHLLAGRALLQHVVDTAAQLSARQVVVITGHGAMEVEAAVSGNTGASAGFDINFVRQEPQLGTGHAVQQAVPLLRDDGMVVVLSGDVPLIQAATLRHLIAAAGTDKLALLTIDFADPTGYGRIVRRGDVVQAIVEQKDATPVQREITEVYSGIMALPARQLKAWLARLDKQNAQGEYYLTDIVKFAVADGVPVVAHKIADATQVAGVNSPVQLAALERAFQSKVALQLMEQGVRLADPARLDVRGQLHCAQDVSIDVNCVFEGVVTLGEGVKIGANCVIRNATIAAGAVIHPFTHIEGGQPGSKDAVEVGAGALIGPFARLRPGAKLGQAVHIGNFVEVKNSTLARGAKANHLAYLGDATVGERVNYGAGSITANYDGAFKHRTVLEADVHIGSNCVLIAPLTIGAGGTVGGGSTVTKDTPPGALTVARAKQVSIANWKRPSK.

The pyrophosphorylase stretch occupies residues Met-1–Pro-231. UDP-N-acetyl-alpha-D-glucosamine contacts are provided by residues Lys-20, Gln-78, Gly-83 to Thr-84, Ser-105 to Asp-107, Gly-142, Glu-156, and Asn-229. Mg(2+) is bound at residue Asp-107. Residue Asn-229 coordinates Mg(2+). Residues Val-232–Gln-252 are linker. The N-acetyltransferase stretch occupies residues Gly-253 to Lys-464. 2 residues coordinate UDP-N-acetyl-alpha-D-glucosamine: Arg-343 and Lys-361. The active-site Proton acceptor is His-373. Residues Tyr-376 and Asn-387 each contribute to the UDP-N-acetyl-alpha-D-glucosamine site. Acetyl-CoA-binding positions include Ala-390, Asn-396–Tyr-397, Ser-415, Gly-433, and Arg-450.

It in the N-terminal section; belongs to the N-acetylglucosamine-1-phosphate uridyltransferase family. The protein in the C-terminal section; belongs to the transferase hexapeptide repeat family. As to quaternary structure, homotrimer. The cofactor is Mg(2+).

Its subcellular location is the cytoplasm. The enzyme catalyses alpha-D-glucosamine 1-phosphate + acetyl-CoA = N-acetyl-alpha-D-glucosamine 1-phosphate + CoA + H(+). It carries out the reaction N-acetyl-alpha-D-glucosamine 1-phosphate + UTP + H(+) = UDP-N-acetyl-alpha-D-glucosamine + diphosphate. Its pathway is nucleotide-sugar biosynthesis; UDP-N-acetyl-alpha-D-glucosamine biosynthesis; N-acetyl-alpha-D-glucosamine 1-phosphate from alpha-D-glucosamine 6-phosphate (route II): step 2/2. The protein operates within nucleotide-sugar biosynthesis; UDP-N-acetyl-alpha-D-glucosamine biosynthesis; UDP-N-acetyl-alpha-D-glucosamine from N-acetyl-alpha-D-glucosamine 1-phosphate: step 1/1. It participates in bacterial outer membrane biogenesis; LPS lipid A biosynthesis. In terms of biological role, catalyzes the last two sequential reactions in the de novo biosynthetic pathway for UDP-N-acetylglucosamine (UDP-GlcNAc). The C-terminal domain catalyzes the transfer of acetyl group from acetyl coenzyme A to glucosamine-1-phosphate (GlcN-1-P) to produce N-acetylglucosamine-1-phosphate (GlcNAc-1-P), which is converted into UDP-GlcNAc by the transfer of uridine 5-monophosphate (from uridine 5-triphosphate), a reaction catalyzed by the N-terminal domain. The chain is Bifunctional protein GlmU from Albidiferax ferrireducens (strain ATCC BAA-621 / DSM 15236 / T118) (Rhodoferax ferrireducens).